Reading from the N-terminus, the 611-residue chain is MSVQVVSAAAAAKVPEVELKDLSPSEAESQLGLSTAAVGAMAPPAGGGDPEAPAPAAERPPVPGPGSGPAAALSPAAGKVPQASAMKRSDPHHQHQRHRDGGEALVSPDGTVTEAPRTVKKQIQFADQKQEFNKRPTKIGRRSLSRSISQSSTDSYSSAASYTDSSDDETSPRDKQQKNSKGSSDFCVKNIKQAEFGRREIEIAEQEMPALMALRKRAQGEKPLAGAKIVGCTHITAQTAVLMETLGALGAQCRWAACNIYSTLNEVAAALAESGFPVFAWKGESEDDFWWCIDRCVNVEGWQPNMILDDGGDLTHWIYKKYPNMFKKIKGIVEESVTGVHRLYQLSKAGKLCVPAMNVNDSVTKQKFDNLYCCRESILDGLKRTTDMMFGGKQVVVCGYGEVGKGCCAALKAMGSIVYVTEIDPICALQACMDGFRLVKLNEVIRQVDIVITCTGNKNVVTREHLDRMKNSCIVCNMGHSNTEIDVASLRTPELTWERVRSQVDHVIWPDGKRIVLLAEGRLLNLSCSTVPTFVLSITATTQALALIELYNAPEGRYKQDVYLLPKKMDEYVASLHLPTFDAHLTELTDEQAKYLGLNKNGPFKPNYYRY.

Low complexity-rich tracts occupy residues 1 to 14 (MSVQ…AAKV), 36 to 57 (AAVG…APAA), and 68 to 81 (GPAA…GKVP). The disordered stretch occupies residues 1 to 184 (MSVQVVSAAA…KQQKNSKGSS (184 aa)). N-acetylserine is present on serine 2. An LISN domain, inhibits interaction with ITPR1 region spans residues 2–109 (SVQVVSAAAA…DGGEALVSPD (108 aa)). Position 107 is a phosphoserine (serine 107). A compositionally biased stretch (basic residues) spans 135 to 144 (RPTKIGRRSL). A compositionally biased stretch (low complexity) spans 145-164 (SRSISQSSTDSYSSAASYTD). Phosphoserine is present on residues serine 149, serine 152, serine 155, and serine 158. 3 residues coordinate substrate: threonine 236, aspartate 310, and glutamate 335. NAD(+) is bound at residue 336 to 338 (SVT). Substrate contacts are provided by lysine 365 and aspartate 369. Residues asparagine 370, 401 to 406 (GEVGKG), glutamate 422, asparagine 457, 478 to 479 (MG), and asparagine 525 contribute to the NAD(+) site.

The protein belongs to the adenosylhomocysteinase family. Homotetramer. Forms heteromultimers with AHCYL1 (via the C-terminal region). Interacts with ITPR1; with lower affinity than AHCYL1 and maybe via ITPR1. Interacts with SLC4A4. Interacts with ZCCHC4. NAD(+) is required as a cofactor. Phosphorylated during neuronal differentiation at the LISN domain.

The protein resides in the cytoplasm. The protein localises to the microsome. It carries out the reaction S-adenosyl-L-homocysteine + H2O = L-homocysteine + adenosine. It participates in amino-acid biosynthesis; L-homocysteine biosynthesis; L-homocysteine from S-adenosyl-L-homocysteine: step 1/1. Its function is as follows. May regulate the electrogenic sodium/bicarbonate cotransporter SLC4A4 activity and Mg(2+)-sensitivity. On the contrary of its homolog AHCYL1, does not regulate ITPR1 sensitivity to inositol 1,4,5-trisphosphate. The polypeptide is Adenosylhomocysteinase 3 (AHCYL2) (Homo sapiens (Human)).